The chain runs to 669 residues: DNA ligase (669 aa).

NAD(+) is bound by residues 34–38 (DAEYD), 83–84 (SL), and glutamate 114. The N6-AMP-lysine intermediate role is filled by lysine 116. NAD(+) contacts are provided by arginine 137, glutamate 171, lysine 287, and lysine 311. Positions 405, 408, 423, and 428 each coordinate Zn(2+). Residues 591–669 (NVESYFAGKT…EERFLQELNK (79 aa)) enclose the BRCT domain.

This sequence belongs to the NAD-dependent DNA ligase family. LigA subfamily. Requires Mg(2+) as cofactor. Mn(2+) serves as cofactor.

It catalyses the reaction NAD(+) + (deoxyribonucleotide)n-3'-hydroxyl + 5'-phospho-(deoxyribonucleotide)m = (deoxyribonucleotide)n+m + AMP + beta-nicotinamide D-nucleotide.. DNA ligase that catalyzes the formation of phosphodiester linkages between 5'-phosphoryl and 3'-hydroxyl groups in double-stranded DNA using NAD as a coenzyme and as the energy source for the reaction. It is essential for DNA replication and repair of damaged DNA. This is DNA ligase from Bacillus cereus (strain AH187).